We begin with the raw amino-acid sequence, 564 residues long: Cysteine--tRNA ligase CPS1, chloroplastic/mitochondrial (564 aa).

Residues 1–43 (MAAAVVVRRAAGLIPLLSSRFGARMPLHRALSQIPPPRFCRLL) constitute a chloroplast and mitochondrion transit peptide. Cysteine 93 lines the Zn(2+) pocket. The short motif at 95-105 (VTPYDDSHIGH) is the 'HIGH' region element. Residues cysteine 273, histidine 298, and glutamate 302 each contribute to the Zn(2+) site. The 'KMSKS' region motif lies at 330–334 (KMSKS). Residue lysine 333 participates in ATP binding.

This sequence belongs to the class-I aminoacyl-tRNA synthetase family. Zn(2+) serves as cofactor.

The protein resides in the plastid. It is found in the chloroplast. It localises to the mitochondrion. It catalyses the reaction tRNA(Cys) + L-cysteine + ATP = L-cysteinyl-tRNA(Cys) + AMP + diphosphate. Nuclear genome-encoded factor required for normal assembly of chloroplast polysomes. This is Cysteine--tRNA ligase CPS1, chloroplastic/mitochondrial from Zea mays (Maize).